We begin with the raw amino-acid sequence, 922 residues long: Hexokinase-3 (922 aa).

Positions 1-23 are disordered; the sequence is MATIGPSGLHPGERASVCPHEGV. Hexokinase domains follow at residues 25-469 and 475-911; these read RPSG…MVTA and AAHR…LVTA. The interval 82–218 is hexokinase small subdomain 1; sequence HGTEQGDFLV…TYRIDVVAMV (137 aa). 93–100 is an ATP binding site; the sequence is ELGATGAS. Residue 93–102 coordinates D-glucose 6-phosphate; the sequence is ELGATGASLR. Residues Ser166, 183–184, and 219–220 each bind D-glucose; these read TK and ND. A hexokinase large subdomain 1 region spans residues 219 to 458; it reads NDTVGTMMGC…CDVSFIPSVD (240 aa). 2 residues coordinate D-glucose 6-phosphate: Asp220 and Thr243. Residues Asn246, Glu271, and 302 to 305 each bind D-glucose; that span reads QRFE. 424–426 is a D-glucose 6-phosphate binding site; it reads GGR. Residues 436–437 and 540–545 contribute to the ATP site; these read RI and DLGGTN. Residues 529-660 form a hexokinase small subdomain 2 region; that stretch reads DGSERGDFLA…AVELNVVAIV (132 aa). A D-glucose 6-phosphate-binding site is contributed by 540 to 544; it reads DLGGT. Residues 608–609, 625–626, and 661–662 each bind D-glucose; these read SF, TK, and ND. The interval 661–900 is hexokinase large subdomain 2; the sequence is NDTVGTMMSC…CTVTFLQSED (240 aa). D-glucose 6-phosphate is bound by residues Asp662 and Thr685. ATP is bound at residue Thr685. D-glucose contacts are provided by residues 687-688, Glu713, and Glu747; that span reads TN. Residues 752-753, 789-793, and 868-872 each bind ATP; these read GM, TKFLS, and TLYKL. Residues 866 to 868 and Ser902 each bind D-glucose 6-phosphate; that span reads DGT.

Belongs to the hexokinase family.

The enzyme catalyses a D-hexose + ATP = a D-hexose 6-phosphate + ADP + H(+). The catalysed reaction is D-fructose + ATP = D-fructose 6-phosphate + ADP + H(+). It carries out the reaction D-glucose + ATP = D-glucose 6-phosphate + ADP + H(+). The protein operates within carbohydrate metabolism; hexose metabolism. It participates in carbohydrate degradation; glycolysis; D-glyceraldehyde 3-phosphate and glycerone phosphate from D-glucose: step 1/4. Its activity is regulated as follows. Hexokinase is an allosteric enzyme inhibited by its product D-glucose 6-phosphate. In terms of biological role, catalyzes the phosphorylation of hexose, such as D-glucose and D-fructose, to hexose 6-phosphate (D-glucose 6-phosphate and D-fructose 6-phosphate, respectively). Mediates the initial step of glycolysis by catalyzing phosphorylation of D-glucose to D-glucose 6-phosphate. The polypeptide is Hexokinase-3 (Mus musculus (Mouse)).